Consider the following 455-residue polypeptide: UDP-N-acetylmuramate--L-alanine ligase (455 aa).

An ATP-binding site is contributed by 109 to 115 (GTHGKTT).

The protein belongs to the MurCDEF family.

It localises to the cytoplasm. The catalysed reaction is UDP-N-acetyl-alpha-D-muramate + L-alanine + ATP = UDP-N-acetyl-alpha-D-muramoyl-L-alanine + ADP + phosphate + H(+). It functions in the pathway cell wall biogenesis; peptidoglycan biosynthesis. Its function is as follows. Cell wall formation. The polypeptide is UDP-N-acetylmuramate--L-alanine ligase (Caldicellulosiruptor saccharolyticus (strain ATCC 43494 / DSM 8903 / Tp8T 6331)).